The sequence spans 117 residues: Iron-sulfur cluster insertion protein ErpA (117 aa).

Cys45, Cys109, and Cys111 together coordinate iron-sulfur cluster.

It belongs to the HesB/IscA family. As to quaternary structure, homodimer. Requires iron-sulfur cluster as cofactor.

Functionally, required for insertion of 4Fe-4S clusters for at least IspG. This Hahella chejuensis (strain KCTC 2396) protein is Iron-sulfur cluster insertion protein ErpA.